Reading from the N-terminus, the 347-residue chain is MDKTKALDAALSQIERSFGKGSIMRLGQKEQVVEIETVPTGSLSLDIALGIGGLPKGRIVEIYGPESSGKTTLALHAIAEAQKGGGICAFIDAEHALDPIYARKLGVDLENLFISQPDTGEQALEITETLVRSGAVDVLVVDSVAALTPRAEIDGEMGDALPGLQARLMSKALRKLTASIFRSNCMVIFINQIRMKIGVMFGSPETTTGGNALKFYASVRLDIRRIGSIKDRDMIVGNQTRVKVVKNKLAPPFKQVEFDIIYGEGISKLGELIDLGVKVGIVEKSGSWFSYNSQRLGQGRENAKQFLREHAEIAAEIETALRQNAGLIAIELLENAGSENTEGDEVI.

Position 64 to 71 (64 to 71 (GPESSGKT)) interacts with ATP.

Belongs to the RecA family.

It localises to the cytoplasm. Its function is as follows. Can catalyze the hydrolysis of ATP in the presence of single-stranded DNA, the ATP-dependent uptake of single-stranded DNA by duplex DNA, and the ATP-dependent hybridization of homologous single-stranded DNAs. It interacts with LexA causing its activation and leading to its autocatalytic cleavage. This is Protein RecA from Bartonella tribocorum (strain CIP 105476 / IBS 506).